A 331-amino-acid chain; its full sequence is 6-phosphogluconolactonase (331 aa).

An N6-acetyllysine modification is found at Lys-287.

Belongs to the cycloisomerase 2 family.

It carries out the reaction 6-phospho-D-glucono-1,5-lactone + H2O = 6-phospho-D-gluconate + H(+). It participates in carbohydrate degradation; pentose phosphate pathway; D-ribulose 5-phosphate from D-glucose 6-phosphate (oxidative stage): step 2/3. Functionally, catalyzes the hydrolysis of 6-phosphogluconolactone to 6-phosphogluconate. In Escherichia coli (strain SMS-3-5 / SECEC), this protein is 6-phosphogluconolactonase.